The chain runs to 147 residues: uncharacterized protein (147 aa).

The region spanning 44–147 is the HTH LytTR-type domain; the sequence is LVGYIDKEIH…LKSIKERLSI (104 aa).

It is found in the cytoplasm. This is an uncharacterized protein from Staphylococcus aureus (strain bovine RF122 / ET3-1).